We begin with the raw amino-acid sequence, 428 residues long: Growth/differentiation factor 2 (428 aa).

Positions 1-22 are cleaved as a signal peptide; that stretch reads MSPGAFRVALLPLFLLVCVTQQ. The propeptide occupies 23–318; it reads KPLQNWEQAS…VGPLLARRKR (296 aa). N-linked (GlcNAc...) asparagine glycosylation is found at Asn70 and Asn135. A disulfide bridge connects residues Cys155 and Cys236. The N-linked (GlcNAc...) asparagine glycan is linked to Asn262. 3 disulfide bridges follow: Cys326-Cys392, Cys355-Cys425, and Cys359-Cys427. The interval 401–415 is interaction with ENG; sequence SILYKDDMGVPTLKY.

Belongs to the TGF-beta family. As to quaternary structure, homodimer; disulfide-linked. Detected in extracellular fluid as mature homodimer, and in complex with its propeptide. Interacts with ACVRL1, BMPR2 and ACVR2B with high affinity (in vitro). Identified in a complex with ACVRL1 and ACVR2B. Has ten times lower affinity for ACVR2A (in vitro). Interacts with ENG, forming a heterotetramer with a 2:2 stoichiometry. Can form a heteromeric complex with ENG and ACVRL1. Interacts with type I receptor ACVR1. In terms of processing, a reversible disulfide bond can be formed between the two subunits in the homodimer; this has no effect on GDF2 activity.

It is found in the secreted. Its function is as follows. Potent circulating inhibitor of angiogenesis. Signals through the type I activin receptor ACVRL1 but not other Alks. Signaling through SMAD1 in endothelial cells requires TGF-beta coreceptor endoglin/ENG. The sequence is that of Growth/differentiation factor 2 (Gdf2) from Mus musculus (Mouse).